A 214-amino-acid polypeptide reads, in one-letter code: A-type ATP synthase subunit D (214 aa).

This sequence belongs to the V-ATPase D subunit family. Has multiple subunits with at least A(3), B(3), C, D, E, F, H, I and proteolipid K(x).

It is found in the cell membrane. Its function is as follows. Component of the A-type ATP synthase that produces ATP from ADP in the presence of a proton gradient across the membrane. The protein is A-type ATP synthase subunit D of Methanosphaera stadtmanae (strain ATCC 43021 / DSM 3091 / JCM 11832 / MCB-3).